A 147-amino-acid polypeptide reads, in one-letter code: Ribonuclease pancreatic gamma-type (147 aa).

Positions 1–25 (MGLEKSFLLFSLLVLVLGWVQPSLG) are cleaved as a signal peptide. Lys35 and Arg38 together coordinate substrate. His40 (proton acceptor) is an active-site residue. Intrachain disulfides connect Cys54/Cys112, Cys68/Cys123, Cys86/Cys138, and Cys93/Cys100. Residues 69 to 73 (KPMNT), Lys94, and Arg113 each bind substrate. His142 acts as the Proton donor in catalysis.

The protein belongs to the pancreatic ribonuclease family. In terms of assembly, monomer.

Its subcellular location is the secreted. The enzyme catalyses an [RNA] containing cytidine + H2O = an [RNA]-3'-cytidine-3'-phosphate + a 5'-hydroxy-ribonucleotide-3'-[RNA].. It carries out the reaction an [RNA] containing uridine + H2O = an [RNA]-3'-uridine-3'-phosphate + a 5'-hydroxy-ribonucleotide-3'-[RNA].. Its function is as follows. Endonuclease that catalyzes the cleavage of RNA on the 3' side of pyrimidine nucleotides. Acts on single-stranded and double-stranded RNA. The sequence is that of Ribonuclease pancreatic gamma-type from Rattus rattus (Black rat).